The sequence spans 164 residues: Cytochrome c oxidase subunit 4, mitochondrial (164 aa).

The N-terminal 33 residues, Met-1–Arg-33, are a transit peptide targeting the mitochondrion. Positions 120, 128, 143, and 146 each coordinate Zn(2+).

This sequence belongs to the cytochrome c oxidase subunit 5B family. In terms of assembly, component of the cytochrome c oxidase (complex IV, CIV), a multisubunit enzyme composed of a catalytic core of 3 subunits and several supernumerary subunits. The complex exists as a monomer or a dimer and forms supercomplexes (SCs) in the inner mitochondrial membrane with ubiquinol-cytochrome c oxidoreductase (cytochrome b-c1 complex, complex III, CIII).

It is found in the mitochondrion inner membrane. It functions in the pathway energy metabolism; oxidative phosphorylation. In terms of biological role, component of the cytochrome c oxidase, the last enzyme in the mitochondrial electron transport chain which drives oxidative phosphorylation. The respiratory chain contains 3 multisubunit complexes succinate dehydrogenase (complex II, CII), ubiquinol-cytochrome c oxidoreductase (cytochrome b-c1 complex, complex III, CIII) and cytochrome c oxidase (complex IV, CIV), that cooperate to transfer electrons derived from NADH and succinate to molecular oxygen, creating an electrochemical gradient over the inner membrane that drives transmembrane transport and the ATP synthase. Cytochrome c oxidase is the component of the respiratory chain that catalyzes the reduction of oxygen to water. Electrons originating from reduced cytochrome c in the intermembrane space (IMS) are transferred via the dinuclear copper A center (CU(A)) of subunit 2 and heme A of subunit 1 to the active site in subunit 1, a binuclear center (BNC) formed by heme A3 and copper B (CU(B)). The BNC reduces molecular oxygen to 2 water molecules using 4 electrons from cytochrome c in the IMS and 4 protons from the mitochondrial matrix. This is Cytochrome c oxidase subunit 4, mitochondrial (cox4) from Schizosaccharomyces pombe (strain 972 / ATCC 24843) (Fission yeast).